A 223-amino-acid polypeptide reads, in one-letter code: Translation initiation factor 6 (223 aa).

Belongs to the eIF-6 family.

Its function is as follows. Binds to the 50S ribosomal subunit and prevents its association with the 30S ribosomal subunit to form the 70S initiation complex. This is Translation initiation factor 6 from Thermofilum pendens (strain DSM 2475 / Hrk 5).